The primary structure comprises 296 residues: Chronophin (296 aa).

Asp-25 acts as the Nucleophile in catalysis. Mg(2+) is bound by residues Asp-25 and Asn-27. The Proton donor role is filled by Asn-27. Residues 58-60 (SNN), His-182, and Lys-213 each bind substrate. Residue Asp-238 coordinates Mg(2+).

This sequence belongs to the HAD-like hydrolase superfamily. As to quaternary structure, homodimer. Mg(2+) serves as cofactor. Detected in brain (at protein level).

The protein localises to the cytoplasm. Its subcellular location is the cytosol. The protein resides in the cytoskeleton. It localises to the cell projection. It is found in the ruffle membrane. The protein localises to the lamellipodium membrane. Its subcellular location is the cell membrane. The catalysed reaction is pyridoxal 5'-phosphate + H2O = pyridoxal + phosphate. It carries out the reaction pyridoxine 5'-phosphate + H2O = pyridoxine + phosphate. The enzyme catalyses pyridoxamine + phosphate = pyridoxamine 5'-phosphate + H2O. It catalyses the reaction O-phospho-L-seryl-[protein] + H2O = L-seryl-[protein] + phosphate. Its function is as follows. Functions as a pyridoxal phosphate (PLP) phosphatase, which also catalyzes the dephosphorylation of pyridoxine 5'-phosphate (PNP) and pyridoxamine 5'-phosphate (PMP), with order of substrate preference PLP &gt; PNP &gt; PMP and therefore plays a role in vitamin B6 metabolism. Also functions as a protein serine phosphatase that specifically dephosphorylates 'Ser-3' in proteins of the actin-depolymerizing factor (ADF)/cofilin family like CFL1 and DSTN. Thereby, regulates cofilin-dependent actin cytoskeleton reorganization, being required for normal progress through mitosis and normal cytokinesis. Does not dephosphorylate phosphothreonines in LIMK1. Does not dephosphorylate peptides containing phosphotyrosine. This chain is Chronophin, found in Bos taurus (Bovine).